Consider the following 1776-residue polypeptide: Histone transcription regulator 3 homolog (1776 aa).

Disordered stretches follow at residues 180 to 218 (IPVPEDESTHDDDVEKNDSKEVDKENNEVPDGEILIDEG), 241 to 260 (NDGKETQDSKNPSEKDVEGS), and 1709 to 1776 (ADTI…SASE). The span at 190-206 (DDDVEKNDSKEVDKENN) shows a compositional bias: basic and acidic residues. Basic and acidic residues-rich tracts occupy residues 1716–1742 (NNDKSPKNNGIKDNENSIPDSRARTLD) and 1766–1776 (LNSDHHDSASE).

The protein belongs to the HIR3 family.

The protein localises to the nucleus. Functionally, has a role in a nucleosome assembly pathway that is required for the integrity of heterochromatin and proper chromosome segregation. The protein is Histone transcription regulator 3 homolog (HIR3) of Debaryomyces hansenii (strain ATCC 36239 / CBS 767 / BCRC 21394 / JCM 1990 / NBRC 0083 / IGC 2968) (Yeast).